Reading from the N-terminus, the 137-residue chain is 6,7-dimethyl-8-ribityllumazine synthase (137 aa).

5-amino-6-(D-ribitylamino)uracil contacts are provided by residues Phe11, 43 to 45, and 67 to 69; these read SFD and CVI. (2S)-2-hydroxy-3-oxobutyl phosphate is bound at residue 72 to 73; it reads DT. His75 serves as the catalytic Proton donor. Leu100 contacts 5-amino-6-(D-ribitylamino)uracil. Arg115 is a binding site for (2S)-2-hydroxy-3-oxobutyl phosphate.

Belongs to the DMRL synthase family. In terms of assembly, forms an icosahedral capsid composed of 60 subunits, arranged as a dodecamer of pentamers.

It carries out the reaction (2S)-2-hydroxy-3-oxobutyl phosphate + 5-amino-6-(D-ribitylamino)uracil = 6,7-dimethyl-8-(1-D-ribityl)lumazine + phosphate + 2 H2O + H(+). The protein operates within cofactor biosynthesis; riboflavin biosynthesis; riboflavin from 2-hydroxy-3-oxobutyl phosphate and 5-amino-6-(D-ribitylamino)uracil: step 1/2. In terms of biological role, catalyzes the formation of 6,7-dimethyl-8-ribityllumazine by condensation of 5-amino-6-(D-ribitylamino)uracil with 3,4-dihydroxy-2-butanone 4-phosphate. This is the penultimate step in the biosynthesis of riboflavin. The sequence is that of 6,7-dimethyl-8-ribityllumazine synthase from Methanococcus maripaludis (strain C5 / ATCC BAA-1333).